We begin with the raw amino-acid sequence, 211 residues long: Rho-related GTP-binding protein RhoF (211 aa).

M1 carries the N-acetylmethionine modification. Residue 26–33 (GDGGCGKT) coordinates GTP. The short motif at 48–56 (YAPSVFEKY) is the Effector region element. Residues 73–77 (DTAGQ) and 131–134 (CKTD) contribute to the GTP site. C208 is subject to Cysteine methyl ester. The S-geranylgeranyl cysteine moiety is linked to residue C208. Residues 209-211 (LLL) constitute a propeptide, removed in mature form.

Belongs to the small GTPase superfamily. Rho family.

It is found in the cell membrane. Its subcellular location is the cytoplasm. It localises to the cytoskeleton. Plasma membrane-associated small GTPase which cycles between an active GTP-bound and an inactive GDP-bound state. Causes the formation of thin, actin-rich surface projections called filopodia. Functions cooperatively with CDC42 and Rac to generate additional structures, increasing the diversity of actin-based morphology. This is Rho-related GTP-binding protein RhoF (RHOF) from Homo sapiens (Human).